The sequence spans 1180 residues: MNPYQNKNEYETLNASQKKLNISNNYTRYPIENSPKQLLQSTNYKDWLNMCQQNQQYGGDFETFIDSGELSAYTIVVGTVLTGFGFTTPLGLALIGFGTLIPVLFPAQDQSNTWSDFITQTKNIIKKEIASTYISNANKILNRSFNVISTYHNHLKTWENNPNPQNTQDVRTQIQLVHYHFQNVIPELVNSCPPNPSDCDYYNILVLSSYAQAANLHLTVLNQAVKFEAYLKNNRQFDYLEPLPTAIDYYPVLTKAIEDYTNYCVTTYKKGLNLIKTTPDSNLDGNINWNTYNTYRTKMTTAVLDLVALFPNYDVGKYPIGVQSELTREIYQVLNFEESPYKYYDFQYQEDSLTRRPHLFTWLDSLNFYEKAQTTPNNFFTSHYNMFHYTLDNISQKSSVFGNHNVTDKLKSLGLATNIYIFLLNVISLDNKYLNDYNNISKMDFFITNGTRLLEKELTAGSGQITYDVNKNIFGLPILKRRENQGNPTLFPTYDNYSHILSFIKSLSIPATYKTQVYTFAWTHSSVDPKNTIYTHLTTQIPAVKANSLGTASKVVQGPGHTGGDLIDFKDHFKITCQHSNFQQSYFIRIRYASNGSANTRAVINLSIPGVAELGMALNPTFSGTDYTNLKYKDFQYLEFSNEVKFAPNQNISLVFNRSDVYTNTTVLIDKIEFLPITRSIREDREKQKLETVQQIINTFYANPIKNTLQSELTDYDIDQAANLVECISEELYPKEKMLLLDEVKNAKQLSQSRNVLQNGDFESATLGWTTSDNITIQEDDPIFKGHYLHMSGARDIDGTIFPTYIFQKIDESKLKPYTRYLVRGFVGSSKDVELVVSRYGEEIDAIMNVPADLNYLYPSTFDCEGSNRCETSAVPANIGNTSDMLYSCQYDTGKKHVVCQDSHQFSFTIDTGALDTNENIGVWVMFKISSPDGYASLDNLEVIEEGPIDGEALSRVKHMEKKWNDQMEAKRSETQQAYDVAKQAIDALFTNVQDEALQFDTTLAQIQYAEYLVQSIPYVYNDWLSDVPGMNYDIYVELDARVAQARYLYDTRNIIKNGDFTQGVMGWHVTGNADVQQIDGVSVLVLSNWSAGVSQNVHLQHNHGYVLRVIAKKEGPGNGYVTLMDCEENQEKLTFTSCEEGYITKTVDVFPDTDRVRIEIGETEGSFYIESIELICMNE.

The protein belongs to the delta endotoxin family.

Functionally, promotes colloidosmotic lysis by binding to the midgut epithelial cells of insects. The protein is Pesticidal crystal protein Cry4Aa (cry4Aa) of Bacillus thuringiensis subsp. israelensis.